A 317-amino-acid chain; its full sequence is Ribosomal protein L11 methyltransferase (317 aa).

S-adenosyl-L-methionine is bound by residues Thr-158, Gly-179, Asp-201, and Asn-244.

This sequence belongs to the methyltransferase superfamily. PrmA family.

It localises to the cytoplasm. The enzyme catalyses L-lysyl-[protein] + 3 S-adenosyl-L-methionine = N(6),N(6),N(6)-trimethyl-L-lysyl-[protein] + 3 S-adenosyl-L-homocysteine + 3 H(+). In terms of biological role, methylates ribosomal protein L11. This chain is Ribosomal protein L11 methyltransferase, found in Streptococcus pyogenes serotype M6 (strain ATCC BAA-946 / MGAS10394).